We begin with the raw amino-acid sequence, 342 residues long: Uroporphyrinogen decarboxylase (342 aa).

Residues 22-26, Phe-41, Asp-72, Tyr-146, Ser-201, and His-317 each bind substrate; that span reads RQAGR.

The protein belongs to the uroporphyrinogen decarboxylase family. As to quaternary structure, homodimer.

The protein resides in the cytoplasm. It carries out the reaction uroporphyrinogen III + 4 H(+) = coproporphyrinogen III + 4 CO2. It functions in the pathway porphyrin-containing compound metabolism; protoporphyrin-IX biosynthesis; coproporphyrinogen-III from 5-aminolevulinate: step 4/4. Catalyzes the decarboxylation of four acetate groups of uroporphyrinogen-III to yield coproporphyrinogen-III. In Orientia tsutsugamushi (strain Boryong) (Rickettsia tsutsugamushi), this protein is Uroporphyrinogen decarboxylase.